The chain runs to 308 residues: Cyclin-D2-1 (308 aa).

Residues 286 to 308 (EGLSYDSSSPPPPKRRKRSPPGT) are disordered. Over residues 298–308 (PKRRKRSPPGT) the composition is skewed to basic residues.

It belongs to the cyclin family. Cyclin D subfamily.

This chain is Cyclin-D2-1 (CYCD2-1), found in Oryza sativa subsp. japonica (Rice).